A 485-amino-acid polypeptide reads, in one-letter code: ATP synthase subunit beta 1 (485 aa).

157–164 (GGAGVGKT) lines the ATP pocket.

It belongs to the ATPase alpha/beta chains family. F-type ATPases have 2 components, CF(1) - the catalytic core - and CF(0) - the membrane proton channel. CF(1) has five subunits: alpha(3), beta(3), gamma(1), delta(1), epsilon(1). CF(0) has three main subunits: a(1), b(2) and c(9-12). The alpha and beta chains form an alternating ring which encloses part of the gamma chain. CF(1) is attached to CF(0) by a central stalk formed by the gamma and epsilon chains, while a peripheral stalk is formed by the delta and b chains.

The protein resides in the cell inner membrane. The catalysed reaction is ATP + H2O + 4 H(+)(in) = ADP + phosphate + 5 H(+)(out). Functionally, produces ATP from ADP in the presence of a proton gradient across the membrane. The catalytic sites are hosted primarily by the beta subunits. The sequence is that of ATP synthase subunit beta 1 from Psychromonas ingrahamii (strain DSM 17664 / CCUG 51855 / 37).